The sequence spans 276 residues: Large ribosomal subunit protein uL2 (276 aa).

Disordered regions lie at residues 1-20 and 219-276; these read MGIK…TTND and TVRG…RRKK. The span at 7 to 20 shows a compositional bias: polar residues; that stretch reads NPTTNGRRNMTTND.

The protein belongs to the universal ribosomal protein uL2 family. Part of the 50S ribosomal subunit. Forms a bridge to the 30S subunit in the 70S ribosome.

One of the primary rRNA binding proteins. Required for association of the 30S and 50S subunits to form the 70S ribosome, for tRNA binding and peptide bond formation. It has been suggested to have peptidyltransferase activity; this is somewhat controversial. Makes several contacts with the 16S rRNA in the 70S ribosome. The polypeptide is Large ribosomal subunit protein uL2 (Bacillus cereus (strain G9842)).